A 156-amino-acid polypeptide reads, in one-letter code: Transcriptional repressor NrdR (156 aa).

The segment at 3–34 (CPKCNSTQSKVVDSRHADELNAIRRRRECENC) is a zinc-finger region. Residues 49–139 (LIVVKKDGTR…VYKEFKDVDQ (91 aa)) enclose the ATP-cone domain.

The protein belongs to the NrdR family. Zn(2+) is required as a cofactor.

Negatively regulates transcription of bacterial ribonucleotide reductase nrd genes and operons by binding to NrdR-boxes. The chain is Transcriptional repressor NrdR from Staphylococcus aureus (strain NCTC 8325 / PS 47).